Reading from the N-terminus, the 60-residue chain is Acrosin (60 aa).

N-linked (GlcNAc...) asparagine glycosylation is present at asparagine 3. The region spanning 24–60 is the Peptidase S1 domain; the sequence is IIGGQDAAHGSWPWMVSLQIFTYHNNRRYHVCGGSLL.

The protein belongs to the peptidase S1 family. As to quaternary structure, heavy chain (catalytic) and a light chain linked by two disulfide bonds. Forms a heterodimer with SERPINA5.

The catalysed reaction is Preferential cleavage: Arg-|-Xaa, Lys-|-Xaa.. Inhibited by SERPINA5. Its function is as follows. Acrosin is the major protease of mammalian spermatozoa. It is a serine protease of trypsin-like cleavage specificity, it is synthesized in a zymogen form, proacrosin and stored in the acrosome. This chain is Acrosin (ACR), found in Capra hircus (Goat).